The following is a 498-amino-acid chain: Isocitrate dehydrogenase [NADP], mitochondrial (498 aa).

Residues 164 to 166 (TIT) and Arg-171 contribute to the NADP(+) site. Thr-166 contacts substrate. Residues 183 to 189 (SPNGTIR), Arg-198, and Arg-221 contribute to the substrate site. Asp-339 serves as a coordination point for Mn(2+). Lys-347 contributes to the NADP(+) binding site. Asp-362 lines the Mn(2+) pocket. NADP(+) is bound by residues 397 to 402 (GTVTRH) and Asn-415.

Belongs to the isocitrate and isopropylmalate dehydrogenases family. Mg(2+) serves as cofactor. It depends on Mn(2+) as a cofactor.

It is found in the mitochondrion. The enzyme catalyses D-threo-isocitrate + NADP(+) = 2-oxoglutarate + CO2 + NADPH. The sequence is that of Isocitrate dehydrogenase [NADP], mitochondrial (icdA) from Aspergillus niger.